Consider the following 479-residue polypeptide: Acetylcholine receptor subunit alpha-type acr-15 (479 aa).

The signal sequence occupies residues 1–18 (MLLPILLHFLLLITQLNG). Residues 19–230 (SPAEVRLIND…HLRRRTLYYS (212 aa)) lie on the Extracellular side of the membrane. Residues Asn-60 and Asn-92 are each glycosylated (N-linked (GlcNAc...) asparagine). The cysteines at positions 146 and 160 are disulfide-linked. The N-linked (GlcNAc...) asparagine glycan is linked to Asn-200. A disulfide bridge links Cys-208 with Cys-209. A helical membrane pass occupies residues 231-251 (FNLIAPVLLTMILVILGFTVS). Topologically, residues 252–257 (PETCEK) are cytoplasmic. A helical membrane pass occupies residues 258-278 (VGLQISVSLAICIFLTIMSEL). Residues 279–285 (TPQTSEA) lie on the Extracellular side of the membrane. The helical transmembrane segment at 286–306 (VPLLGVFFHTCNFISVLATSF) threads the bilayer. The Cytoplasmic portion of the chain corresponds to 307-453 (TVYVQSFHFR…WRFAAIVVDR (147 aa)). Residues 454-474 (LCLLAFSLLIVVVSIIIALRA) traverse the membrane as a helical segment. Residues 475–479 (PYLFA) are Extracellular-facing.

It belongs to the ligand-gated ion channel (TC 1.A.9) family. Acetylcholine receptor (TC 1.A.9.1) subfamily. In terms of tissue distribution, expressed in interneurons, motor neurons, pharyngeal neurons and muscles.

The protein resides in the cell membrane. Its subcellular location is the postsynaptic cell membrane. After binding acetylcholine, the AChR responds by an extensive change in conformation that affects all subunits and leads to opening of an ion-conducting channel across the plasma membrane. Activity is required in glutamatergic neurons to mediate nicotine-induced and nicotine-motivated behaviors. The chain is Acetylcholine receptor subunit alpha-type acr-15 from Caenorhabditis elegans.